Here is a 350-residue protein sequence, read N- to C-terminus: NADH-cytochrome b5 reductase 2 (350 aa).

Residues 43–63 traverse the membrane as a helical segment; that stretch reads PLVLALGGVAGIGAWYGLGGF. The region spanning 96 to 204 is the FAD-binding FR-type domain; sequence DQFVEFTLKE…KGPIAKFAYK (109 aa). FAD is bound at residue 207–242; that stretch reads EFESIGMIAGGSGITPMYQVIQDIASNPSDKTKVTL.

This sequence belongs to the flavoprotein pyridine nucleotide cytochrome reductase family. FAD serves as cofactor.

The protein localises to the mitochondrion outer membrane. The catalysed reaction is 2 Fe(III)-[cytochrome b5] + NADH = 2 Fe(II)-[cytochrome b5] + NAD(+) + H(+). In terms of biological role, may mediate the reduction of outer membrane cytochrome b5. In Mycosarcoma maydis (Corn smut fungus), this protein is NADH-cytochrome b5 reductase 2 (MCR1).